The primary structure comprises 87 residues: MKHIDKGTVVRTVLLFIALVNQTLIMFGKPVLPVAEDQIHTLADALYSAGSAAFTIAASLVAWYKNNYVTSKGKMQKEVLQKKGLTK.

Residues 42-62 (LADALYSAGSAAFTIAASLVA) traverse the membrane as a helical segment.

The protein belongs to the SPP1 holin family.

The protein resides in the membrane. This is an uncharacterized protein from Bacillus licheniformis.